The primary structure comprises 357 residues: DNA replication and repair protein RecF (357 aa).

30–37 lines the ATP pocket; the sequence is GANGSGKT.

This sequence belongs to the RecF family.

It localises to the cytoplasm. The RecF protein is involved in DNA metabolism; it is required for DNA replication and normal SOS inducibility. RecF binds preferentially to single-stranded, linear DNA. It also seems to bind ATP. The sequence is that of DNA replication and repair protein RecF from Salmonella paratyphi A (strain ATCC 9150 / SARB42).